The chain runs to 368 residues: 3-isopropylmalate dehydrogenase (368 aa).

79-91 (GPEWGTSSTVRPE) contributes to the NAD(+) binding site. Substrate is bound by residues arginine 98, arginine 108, arginine 137, and aspartate 226. Residues aspartate 226, aspartate 251, and aspartate 255 each contribute to the Mg(2+) site. 291–303 (GSAPDISGKGIVN) is an NAD(+) binding site.

The protein belongs to the isocitrate and isopropylmalate dehydrogenases family. As to quaternary structure, homodimer. Mg(2+) serves as cofactor. The cofactor is Mn(2+).

The protein localises to the cytoplasm. It catalyses the reaction (2R,3S)-3-isopropylmalate + NAD(+) = 4-methyl-2-oxopentanoate + CO2 + NADH. The protein operates within amino-acid biosynthesis; L-leucine biosynthesis; L-leucine from 3-methyl-2-oxobutanoate: step 3/4. In terms of biological role, catalyzes the oxidation of 3-carboxy-2-hydroxy-4-methylpentanoate (3-isopropylmalate) to 3-carboxy-4-methyl-2-oxopentanoate. The product decarboxylates to 4-methyl-2 oxopentanoate. This Neurospora crassa (strain ATCC 24698 / 74-OR23-1A / CBS 708.71 / DSM 1257 / FGSC 987) protein is 3-isopropylmalate dehydrogenase (leu-1).